The following is a 261-amino-acid chain: Type III pantothenate kinase (261 aa).

An ATP-binding site is contributed by 6–13 (DVGNTNAK). 108–111 (GADR) is a substrate binding site. Asp-110 serves as the catalytic Proton acceptor. Residue Thr-134 coordinates ATP. Residue Thr-188 coordinates substrate.

It belongs to the type III pantothenate kinase family. As to quaternary structure, homodimer. NH4(+) is required as a cofactor. It depends on K(+) as a cofactor.

It is found in the cytoplasm. The catalysed reaction is (R)-pantothenate + ATP = (R)-4'-phosphopantothenate + ADP + H(+). It participates in cofactor biosynthesis; coenzyme A biosynthesis; CoA from (R)-pantothenate: step 1/5. In terms of biological role, catalyzes the phosphorylation of pantothenate (Pan), the first step in CoA biosynthesis. In Sphingopyxis alaskensis (strain DSM 13593 / LMG 18877 / RB2256) (Sphingomonas alaskensis), this protein is Type III pantothenate kinase.